The primary structure comprises 75 residues: U14-hexatoxin-Mg1a (75 aa).

The first 19 residues, 1-19 (MKLTLFILIVFVVLANVYA), serve as a signal peptide directing secretion. A propeptide spanning residues 20 to 31 (AGISERNIIGGR) is cleaved from the precursor.

In terms of processing, contains 4 disulfide bonds. In terms of tissue distribution, expressed by the venom gland.

The protein localises to the secreted. Its function is as follows. No toxicity is observed upon intracranial injection into mice and intrathorax injection into crickets. The chain is U14-hexatoxin-Mg1a from Macrothele gigas (Japanese funnel web spider).